A 437-amino-acid chain; its full sequence is Eukaryotic peptide chain release factor subunit 1 (437 aa).

The short motif at 61–64 (NIKS) is the NIKS motif; plays an important role in translational termination element.

This sequence belongs to the eukaryotic release factor 1 family. Component of the eRF1-eRF3-GTP ternary complex, composed of ETF1/ERF1 and eRF3 (GSPT1/ERF3A or GSPT2/ERF3B) and GTP.

The protein resides in the cytoplasm. In terms of biological role, component of the eRF1-eRF3-GTP ternary complex, a ternary complex that mediates translation termination in response to the termination codons. The eRF1-eRF3-GTP complex binds to a stop codon in the ribosomal A-site. ETF1/ERF1 is responsible for stop codon recognition and inducing hydrolysis of peptidyl-tRNA. Following GTP hydrolysis, eRF3 (GSPT1/ERF3A or GSPT2/ERF3B) dissociates, permitting ETF1/eRF1 to accommodate fully in the A-site, followed by hydrolysis of peptidyl-tRNA. This is Eukaryotic peptide chain release factor subunit 1 (etf1) from Xenopus tropicalis (Western clawed frog).